We begin with the raw amino-acid sequence, 320 residues long: Adenosine receptor A3 (320 aa).

Residues 1 to 16 (MKANNTTTSALWLQIT) are Extracellular-facing. N4 and N5 each carry an N-linked (GlcNAc...) asparagine glycan. A helical membrane pass occupies residues 17–39 (YITMEAAIGLCAVVGNMLVIWVV). At 40–50 (KLNRTLRTTTF) the chain is on the cytoplasmic side. Residues 51 to 74 (YFIVSLALADIAVGVLVIPLAIAV) traverse the membrane as a helical segment. Residues 75-86 (SLEVQMHFYACL) are Extracellular-facing. Cysteines 85 and 168 form a disulfide. Residues 87 to 108 (FMSCVLLVFTHASIMSLLAIAV) traverse the membrane as a helical segment. The Cytoplasmic portion of the chain corresponds to 109 to 128 (DRYLRVKLTVRYRTVTTQRR). A helical transmembrane segment spans residues 129–150 (IWLFLGLCWLVSFLVGLTPMFG). Topologically, residues 151-179 (WNRKVTLELSQNSSTLSCHFRSVVGLDYM) are extracellular. A helical transmembrane segment spans residues 180-200 (VFFSFITWILIPLVVMCIIYL). Residues 201–233 (DIFYIIRNKLSQNLTGFRETRAFYGREFKTAKS) lie on the Cytoplasmic side of the membrane. Residues 234-257 (LFLVLFLFALCWLPLSIINFVSYF) form a helical membrane-spanning segment. Over 258–263 (NVKIPE) the chain is Extracellular. A helical transmembrane segment spans residues 264-286 (IAMCLGILLSHANSMMNPIVYAC). At 287-320 (KIKKFKETYFVILRACRLCQTSDSLDSNLEQTTE) the chain is on the cytoplasmic side. The S-palmitoyl cysteine moiety is linked to residue C305. Residues T307, T318, and T319 each carry the phosphothreonine modification.

Belongs to the G-protein coupled receptor 1 family. Phosphorylation on Thr-318 and Thr-319 may be crucial for rapid desensitization. Phosphorylation on Thr-318 may be necessary for phosphorylation on Thr-319 to occur. Testis, particularly in spermatocytes and spermatids but not in spermatogonia. Low levels in the brain.

The protein localises to the cell membrane. Receptor for adenosine. The activity of this receptor is mediated by G proteins which inhibits adenylyl cyclase. May play a role during reproduction. This Rattus norvegicus (Rat) protein is Adenosine receptor A3 (Adora3).